A 710-amino-acid chain; its full sequence is Exocyst complex component 5 (710 aa).

Positions 44–96 form a coiled coil; the sequence is DTFIQTIKDLKILQEKQQSKCERLEESLRQEKESHAKKIAKLQERHQTAIDVF.

It belongs to the SEC10 family. In terms of assembly, the exocyst complex is composed of Sec3/Exoc1, Sec5/Exoc2, Sec6/Exoc3, Sec8/Exoc4, Sec10/Exoc5, Sec15/Exoc6, Exo70/Exoc7 and Exo84/Exoc8.

Its function is as follows. Component of the exocyst complex involved in the docking of exocytic vesicles with fusion sites on the plasma membrane. The chain is Exocyst complex component 5 from Drosophila melanogaster (Fruit fly).